Here is a 34-residue protein sequence, read N- to C-terminus: Protein HRURF (34 aa).

In terms of biological role, may function as an inhibitory translational control element that can negatively regulate protein translation of HR gene. The sequence is that of Protein HRURF from Homo sapiens (Human).